Consider the following 1094-residue polypeptide: MSSNSFPYNEQSGGGEATELGQEATSTISPSGAFGLFSSDLKKNEDLKQMLESNKDSAKLDAMKRIVGMIAKGKNASELFPAVVKNVASKNIEIKKLVYVYLVRYAEEQQDLALLSISTFQRALKDPNQLIRASALRVLSSIRVPIIVPIMMLAIKEASADLSPYVRKNAAHAIQKLYSLDPEQKEMLIEVIEKLLKDKSTLVAGSVVMAFEEVCPDRIDLIHKNYRKLCNLLVDVEEWGQVVIIHMLTRYARTQFVSPWKEGDELEDNGKNFYESDDDQKEKTDKKKKPYTMDPDHRLLIRNTKPLLQSRNAAVVMAVAQLYWHISPKSEAGIISKSLVRLLRSNREVQYIVLQNIATMSIQRKGMFEPYLKSFYVRSTDPTMIKTLKLEILTNLANEANISTLLREFQTYVKSQDKQFAAATIQTIGRCATNILEVTDTCLNGLVCLLSNRDEIVVAESVVVIKKLLQMQPAQHGEIIKHMAKLLDSITVPVARASILWLIGENCERVPKIAPDVLRKMAKSFTSEDDLVKLQILNLGAKLYLTNSKQTKLLTQYILNLGKYDQNYDIRDRTRFIRQLIVPNVKSGALSKYAKKIFLAQKPAPLLESPFKDRDHFQLGTLSHTLNIKATGYLELSNWPEVAPDPSVRNVEVIELAKEWTPAGKAKQENSAKKFYSESEEEEDSSDSSSDSESESGSESGEQGESGEEGDSNEDSSEDSSSEQDSESGRESGLENKRTAKRNSKAKGKSDSEDGEKENEKSKTSDSSNDESSSIEDSSSDSESESEPESESESRRVTKEKEKKTKQDRTPLTKDVSLLDLDDFNPVSTPVALPTPALSPSLMADLEGLHLSTSSSVISVSTPAFVPTKTHVLLHRMSGKGLAAHYFFPRQPCIFGDKMVSIQITLNNTTDRKIENIHIGEKKLPIGMKMHVFNPIDSLEPEGSITVSMGIDFCDSTQTASFQLCTKDDCFNVNIQPPVGELLLPVAMSEKDFKKEQGVLTGMNETSAVIIAAPQNFTPSVIFQKVVNVANVGAVPSGQDNIHRFAAKTVHSGSLMLVTVELKEGSTAQLIINTEKTVIGSVLLRELKPVLSQG.

Polar residues predominate over residues 1–11; that stretch reads MSSNSFPYNEQ. Disordered stretches follow at residues 1 to 31 and 268 to 292; these read MSSN…ISPS and DNGK…KPYT. Serine 276 and serine 609 each carry phosphoserine. The tract at residues 662 to 811 is disordered; that stretch reads PAGKAKQENS…EKKTKQDRTP (150 aa). The segment covering 666–677 has biased composition (basic and acidic residues); it reads AKQENSAKKFYS. Acidic residues-rich tracts occupy residues 678-696 and 705-726; these read ESEE…ESES and ESGE…EQDS. Composition is skewed to basic and acidic residues over residues 727–738 and 748–764; these read ESGRESGLENKR and GKSD…KSKT. Phosphoserine is present on residues serine 750 and serine 752. A compositionally biased stretch (low complexity) spans 765–777; it reads SDSSNDESSSIED. Residues 778–791 show a composition bias toward acidic residues; that stretch reads SSSDSESESEPESE. A compositionally biased stretch (basic and acidic residues) spans 792–811; that stretch reads SESRRVTKEKEKKTKQDRTP.

The protein belongs to the adaptor complexes large subunit family. Adaptor protein complex 3 (AP-3) is a heterotetramer composed of two large adaptins (delta-type subunit AP3D1 and beta-type subunit AP3B1 or AP3B2), a medium adaptin (mu-type subunit AP3M1 or AP3M2) and a small adaptin (sigma-type subunit APS1 or AP3S2). AP-3 associates with the BLOC-1 complex. Interacts with KIF3A; interaction is direct; interaction is impaired by pyrophosphorylation of AP3B1. Phosphorylated on serine residues. Post-translationally, pyrophosphorylation by 5-diphosphoinositol pentakisphosphate (5-IP7) impairs interaction with KIF3A. Serine pyrophosphorylation is achieved by Mg(2+)-dependent, but enzyme independent transfer of a beta-phosphate from a inositol pyrophosphate to a pre-phosphorylated serine residue. As to expression, ubiquitously expressed.

It is found in the cytoplasmic vesicle. The protein resides in the clathrin-coated vesicle membrane. It localises to the golgi apparatus. Its function is as follows. Subunit of non-clathrin- and clathrin-associated adaptor protein complex 3 (AP-3) that plays a role in protein sorting in the late-Golgi/trans-Golgi network (TGN) and/or endosomes. The AP complexes mediate both the recruitment of clathrin to membranes and the recognition of sorting signals within the cytosolic tails of transmembrane cargo molecules. AP-3 appears to be involved in the sorting of a subset of transmembrane proteins targeted to lysosomes and lysosome-related organelles. In concert with the BLOC-1 complex, AP-3 is required to target cargos into vesicles assembled at cell bodies for delivery into neurites and nerve terminals. In Homo sapiens (Human), this protein is AP-3 complex subunit beta-1 (AP3B1).